The following is a 582-amino-acid chain: Glutamine--tRNA ligase (582 aa).

Residues 50–60 carry the 'HIGH' region motif; sequence PEPNGYLHIGH. Residues 51–53 and 57–63 each bind ATP; these read EPN and HIGHAKS. L-glutamine contacts are provided by Asp-83 and Tyr-235. ATP contacts are provided by residues Thr-254 and 289–290; that span reads RL. Residues 296 to 300 carry the 'KMSKS' region motif; sequence ITSKR.

This sequence belongs to the class-I aminoacyl-tRNA synthetase family. Monomer.

It is found in the cytoplasm. The catalysed reaction is tRNA(Gln) + L-glutamine + ATP = L-glutaminyl-tRNA(Gln) + AMP + diphosphate. This Cupriavidus metallidurans (strain ATCC 43123 / DSM 2839 / NBRC 102507 / CH34) (Ralstonia metallidurans) protein is Glutamine--tRNA ligase.